The sequence spans 1334 residues: Lysine-specific demethylase 3A-B (1334 aa).

Disordered stretches follow at residues 243–288 (DQND…KTSF), 352–382 (PGIQ…SQNL), and 514–533 (KPQE…VTYP). Residues 267–283 (TEVKQTRNEEVPSKDVT) are compositionally biased toward basic and acidic residues. A C6-type zinc finger spans residues 684–709 (CDACDTTIFNLHWVCPKCGFGVCVDC). Positions 897–901 (LRNLL) match the LXXLL motif motif. In terms of domain architecture, JmjC spans 1089 to 1294 (RREGKLNLAA…HCFCLTQEFR (206 aa)). Residues His1133, Asp1135, and His1262 each contribute to the Fe cation site.

It belongs to the JHDM2 histone demethylase family. Fe(2+) is required as a cofactor.

The protein localises to the cytoplasm. It localises to the nucleus. It carries out the reaction N(6),N(6)-dimethyl-L-lysyl(9)-[histone H3] + 2 2-oxoglutarate + 2 O2 = L-lysyl(9)-[histone H3] + 2 formaldehyde + 2 succinate + 2 CO2. In terms of biological role, histone demethylase that specifically demethylates 'Lys-9' of histone H3, thereby playing a central role in histone code. Preferentially demethylates mono- and dimethylated H3 'Lys-9' residue, with a preference for dimethylated residue, while it has weak or no activity on trimethylated H3 'Lys-9'. Demethylation of Lys residue generates formaldehyde and succinate. This chain is Lysine-specific demethylase 3A-B (kdm3a-b), found in Xenopus laevis (African clawed frog).